A 609-amino-acid chain; its full sequence is MFS siderochrome iron transporter 1 (609 aa).

Basic and acidic residues-rich tracts occupy residues 1–17 and 25–34; these read MSAL…EDNT and PHEKEIHETP. The segment at 1–69 is disordered; it reads MSALTKIREG…NDSDVPSEDV (69 aa). 14 consecutive transmembrane segments (helical) span residues 81-101, 125-145, 154-174, 182-202, 220-240, 245-265, 300-320, 329-349, 368-390, 407-427, 432-452, 469-489, 496-516, and 573-593; these read LTWG…LFLI, LMTT…IPMA, AEGF…MAVS, AAQV…GVLA, SPYM…VIDV, WGFG…FLVL, VIGI…FNLA, TGYI…FGVW, SVVA…NYFF, YVNS…GFLI, FYKW…GLMI, IFIS…VLAA, AAAL…GGAI, and IRML…VPML.

Belongs to the major facilitator superfamily.

The protein resides in the cell membrane. Major facilitator transporter involved in extracellular siderophore uptake. Gibberella zeae produces extracellular coprogen-type siderophores as well as the intracellular siderophore ferricrocin. The role of extracellular siderophores is to supply iron to the fungus during plant infection, and the intracellular ferricrocin is required for intracellular iron distribution and storage with a crucial role in ascus and ascospore development. The protein is MFS siderochrome iron transporter 1 of Gibberella zeae (strain ATCC MYA-4620 / CBS 123657 / FGSC 9075 / NRRL 31084 / PH-1) (Wheat head blight fungus).